Here is a 1624-residue protein sequence, read N- to C-terminus: Reverse gyrase (1624 aa).

Residues 1–42 form an RG N-terminal-type zinc finger; sequence MKAIYRGMCPNCRGAITDERLSNKNPCEGCLSEPILSEDYNE. 4 residues coordinate Zn(2+): Cys-9, Cys-12, Cys-27, and Cys-30. Residues Gln-89 and 106–113 each bind ATP; that span reads APTGMGKS. In terms of domain architecture, Helicase ATP-binding spans 93–256; that stretch reads VKRIIRGKSF…KLKKQLAKLL (164 aa). Residues 213–216 carry the DEAD box motif; that stretch reads DDVD. The interval 636-1624 is topoisomerase I; it reads DLVKSALMIV…LYEEIKRYVR (989 aa). The Toprim domain occupies 640–803; it reads SALMIVESPN…NIKRIEFHEV (164 aa). Glu-646 contributes to the Mg(2+) binding site. The RG C-terminal-type zinc-finger motif lies at 720 to 749; the sequence is IKRCRDCGHQFVDWEQKGVCPRCGSRNVHD. Zn(2+) contacts are provided by Cys-723, Cys-726, Cys-739, and Cys-742. Residue Asp-772 participates in Mg(2+) binding. The region spanning 819–1623 is the Topo IA-type catalytic domain; sequence NEDRVNAQLV…ELYEEIKRYV (805 aa). The 116-residue stretch at 1107 to 1222 folds into the DOD-type homing endonuclease domain; that stretch reads IFGVILGKGT…LSVYLYQIGI (116 aa). Tyr-1366 serves as the catalytic O-(5'-phospho-DNA)-tyrosine intermediate.

This sequence in the N-terminal section; belongs to the DEAD box helicase family. DDVD subfamily. In the C-terminal section; belongs to the type IA topoisomerase family. As to quaternary structure, monomer. The cofactor is Zn(2+). Requires Mg(2+) as cofactor. In terms of processing, this protein undergoes a protein self splicing that involves a post-translational excision of the intervening region (intein) followed by peptide ligation.

It localises to the cytoplasm. It catalyses the reaction ATP + H2O = ADP + phosphate + H(+). Functionally, modifies the topological state of DNA by introducing positive supercoils in an ATP-dependent process, increasing the linking number in steps of +1. Binds to single-stranded DNA, transiently cleaves and then rejoins the ends, introducing a positive supercoil in the process. The scissile phosphodiester is attacked by the catalytic tyrosine of the enzyme, resulting in the formation of a DNA-(5'-phosphotyrosyl)-enzyme intermediate. Probably involved in rewinding DNA strands in regions of the chromosome that have opened up to allow replication, transcription, DNA repair and/or for DNA protection. This is Reverse gyrase from Pyrococcus horikoshii (strain ATCC 700860 / DSM 12428 / JCM 9974 / NBRC 100139 / OT-3).